We begin with the raw amino-acid sequence, 382 residues long: Chaperone protein DnaJ (382 aa).

The J domain maps to 5–69 (DYYEILGVSK…EKRARYDRFG (65 aa)). The CR-type zinc-finger motif lies at 137–219 (GKETEIEIPR…CGGTGRVKRR (83 aa)). Residues C150, C153, C167, C170, C193, C196, C207, and C210 each coordinate Zn(2+). 4 CXXCXGXG motif repeats span residues 150–157 (CDTCQGSG), 167–174 (CPHCHGSG), 193–200 (CPVCGGTG), and 207–214 (CPTCGGTG). Residues 154 to 175 (QGSGAKPGTSPTSCPHCHGSGQ) are disordered.

Belongs to the DnaJ family. As to quaternary structure, homodimer. The cofactor is Zn(2+).

The protein resides in the cytoplasm. Participates actively in the response to hyperosmotic and heat shock by preventing the aggregation of stress-denatured proteins and by disaggregating proteins, also in an autonomous, DnaK-independent fashion. Unfolded proteins bind initially to DnaJ; upon interaction with the DnaJ-bound protein, DnaK hydrolyzes its bound ATP, resulting in the formation of a stable complex. GrpE releases ADP from DnaK; ATP binding to DnaK triggers the release of the substrate protein, thus completing the reaction cycle. Several rounds of ATP-dependent interactions between DnaJ, DnaK and GrpE are required for fully efficient folding. Also involved, together with DnaK and GrpE, in the DNA replication of plasmids through activation of initiation proteins. This is Chaperone protein DnaJ from Geobacillus kaustophilus (strain HTA426).